The following is a 696-amino-acid chain: Polyribonucleotide nucleotidyltransferase (696 aa).

Mg(2+) contacts are provided by aspartate 483 and aspartate 489. Residues 550–609 (PRITTIYVKTDKIRDVIGSGGKNIRGITEATGVTIDIDDTGKINIASTDKAACDMAIKMI) enclose the KH domain. An S1 motif domain is found at 619 to 687 (GKLYMGLVKK…KQGKIKLSRK (69 aa)).

The protein belongs to the polyribonucleotide nucleotidyltransferase family. The cofactor is Mg(2+).

It localises to the cytoplasm. It carries out the reaction RNA(n+1) + phosphate = RNA(n) + a ribonucleoside 5'-diphosphate. In terms of biological role, involved in mRNA degradation. Catalyzes the phosphorolysis of single-stranded polyribonucleotides processively in the 3'- to 5'-direction. This Geotalea daltonii (strain DSM 22248 / JCM 15807 / FRC-32) (Geobacter daltonii) protein is Polyribonucleotide nucleotidyltransferase.